Reading from the N-terminus, the 313-residue chain is Aspartate carbamoyltransferase catalytic subunit (313 aa).

Carbamoyl phosphate contacts are provided by Arg-58 and Thr-59. Residue Lys-86 participates in L-aspartate binding. Positions 108, 136, and 139 each coordinate carbamoyl phosphate. The L-aspartate site is built by Arg-169 and Arg-224. Gly-265 and Pro-266 together coordinate carbamoyl phosphate.

The protein belongs to the aspartate/ornithine carbamoyltransferase superfamily. ATCase family. As to quaternary structure, heterododecamer (2C3:3R2) of six catalytic PyrB chains organized as two trimers (C3), and six regulatory PyrI chains organized as three dimers (R2).

The enzyme catalyses carbamoyl phosphate + L-aspartate = N-carbamoyl-L-aspartate + phosphate + H(+). It participates in pyrimidine metabolism; UMP biosynthesis via de novo pathway; (S)-dihydroorotate from bicarbonate: step 2/3. Functionally, catalyzes the condensation of carbamoyl phosphate and aspartate to form carbamoyl aspartate and inorganic phosphate, the committed step in the de novo pyrimidine nucleotide biosynthesis pathway. The chain is Aspartate carbamoyltransferase catalytic subunit from Natranaerobius thermophilus (strain ATCC BAA-1301 / DSM 18059 / JW/NM-WN-LF).